A 351-amino-acid polypeptide reads, in one-letter code: MTQSTNFDDVYPVQWRDDQVILIDQTRLPLEYKEVAIADYEAMGHAIKSMVVRGAPAIGVAAAYGMYLGARRIQTTELREFVVQLEFVADQLRQTRPTAVNLFWAIDQMLNVAYHSGENVEQIKANLLSQAQQIQLDDLRTCQAIGAAGLEVLPREPHQLTILTHCNAGALATAGYGTAIGVIRAAWSAGRLARVYADETRPRLQGAKLTVWECVQAGIPVTLITDNMAAHCMQQQRIDAVVVGADRIARNGDIANKIGTYGLAVLAKMHAIPFFVAAPLSTVDFALDDGSQIPIEERDPVEIYQPEGNRITPEGAEFYNPAFDVTPASLITAIITEQGAIAPEKLADLQA.

Residues 53–55 (RGA), Arg-96, and Gln-205 contribute to the substrate site. Asp-246 functions as the Proton donor in the catalytic mechanism. Position 256–257 (256–257 (NK)) interacts with substrate.

This sequence belongs to the eIF-2B alpha/beta/delta subunits family. MtnA subfamily.

The enzyme catalyses 5-(methylsulfanyl)-alpha-D-ribose 1-phosphate = 5-(methylsulfanyl)-D-ribulose 1-phosphate. It participates in amino-acid biosynthesis; L-methionine biosynthesis via salvage pathway; L-methionine from S-methyl-5-thio-alpha-D-ribose 1-phosphate: step 1/6. Functionally, catalyzes the interconversion of methylthioribose-1-phosphate (MTR-1-P) into methylthioribulose-1-phosphate (MTRu-1-P). The chain is Methylthioribose-1-phosphate isomerase from Synechocystis sp. (strain ATCC 27184 / PCC 6803 / Kazusa).